A 354-amino-acid chain; its full sequence is Serum paraoxonase/lactonase 3 (354 aa).

Asn29 carries an N-linked (GlcNAc...) asparagine glycan. Cys42 and Cys352 are joined by a disulfide. The Ca(2+) site is built by Glu53 and Asp54. The Proton acceptor role is filled by His114. Ile116 is a binding site for Ca(2+). Ser165 carries the post-translational modification Phosphoserine. Ca(2+) is bound by residues Asn167, Asp168, Asn223, Asp268, and Asn269. N-linked (GlcNAc...) asparagine glycosylation is found at Asn269 and Asn323.

Belongs to the paraoxonase family. As to quaternary structure, homodimer. Requires Ca(2+) as cofactor. Post-translationally, the signal sequence is not cleaved.

The protein localises to the secreted. It is found in the extracellular space. The enzyme catalyses a phenyl acetate + H2O = a phenol + acetate + H(+). It carries out the reaction An aryl dialkyl phosphate + H2O = dialkyl phosphate + an aryl alcohol.. It catalyses the reaction an N-acyl-L-homoserine lactone + H2O = an N-acyl-L-homoserine + H(+). Its function is as follows. Has low activity towards the organophosphate paraxon and aromatic carboxylic acid esters. Rapidly hydrolyzes lactones such as statin prodrugs (e.g. lovastatin). Hydrolyzes aromatic lactones and 5- or 6-member ring lactones with aliphatic substituents but not simple lactones or those with polar substituents. This Homo sapiens (Human) protein is Serum paraoxonase/lactonase 3 (PON3).